Reading from the N-terminus, the 226-residue chain is ATP synthase F(0) complex subunit a (226 aa).

Transmembrane regions (helical) follow at residues 6-26 (FASFITPTLMGLPIVLLIIMF), 68-88 (WSLMLISLIMFIGSTNLLGLL), 97-117 (QLSMNLGMAIPLWAGAVITGF), 138-158 (IPMLIIIETISLFIQPMALAV), 164-184 (ITAGHLLMHLIGGATLVLTSI), and 189-209 (AILTFIILVLLTMLEFAVALI).

Belongs to the ATPase A chain family. As to quaternary structure, component of the ATP synthase complex composed at least of ATP5F1A/subunit alpha, ATP5F1B/subunit beta, ATP5MC1/subunit c (homooctomer), MT-ATP6/subunit a, MT-ATP8/subunit 8, ATP5ME/subunit e, ATP5MF/subunit f, ATP5MG/subunit g, ATP5MK/subunit k, ATP5MJ/subunit j, ATP5F1C/subunit gamma, ATP5F1D/subunit delta, ATP5F1E/subunit epsilon, ATP5PF/subunit F6, ATP5PB/subunit b, ATP5PD/subunit d, ATP5PO/subunit OSCP. ATP synthase complex consists of a soluble F(1) head domain (subunits alpha(3) and beta(3)) - the catalytic core - and a membrane F(0) domain - the membrane proton channel (subunits c, a, 8, e, f, g, k and j). These two domains are linked by a central stalk (subunits gamma, delta, and epsilon) rotating inside the F1 region and a stationary peripheral stalk (subunits F6, b, d, and OSCP). Interacts with DNAJC30; interaction is direct.

The protein localises to the mitochondrion inner membrane. It catalyses the reaction H(+)(in) = H(+)(out). Subunit a, of the mitochondrial membrane ATP synthase complex (F(1)F(0) ATP synthase or Complex V) that produces ATP from ADP in the presence of a proton gradient across the membrane which is generated by electron transport complexes of the respiratory chain. ATP synthase complex consist of a soluble F(1) head domain - the catalytic core - and a membrane F(1) domain - the membrane proton channel. These two domains are linked by a central stalk rotating inside the F(1) region and a stationary peripheral stalk. During catalysis, ATP synthesis in the catalytic domain of F(1) is coupled via a rotary mechanism of the central stalk subunits to proton translocation. With the subunit c (ATP5MC1), forms the proton-conducting channel in the F(0) domain, that contains two crucial half-channels (inlet and outlet) that facilitate proton movement from the mitochondrial intermembrane space (IMS) into the matrix. Protons are taken up via the inlet half-channel and released through the outlet half-channel, following a Grotthuss mechanism. This is ATP synthase F(0) complex subunit a from Ictidomys tridecemlineatus (Thirteen-lined ground squirrel).